Consider the following 444-residue polypeptide: Homogentisate 1,2-dioxygenase (444 aa).

The active-site Proton acceptor is the His-298. Fe cation-binding residues include His-341 and Glu-347. Homogentisate is bound by residues Tyr-356 and His-377. A Fe cation-binding site is contributed by His-377.

It belongs to the homogentisate dioxygenase family. Hexamer; dimer of trimers. The cofactor is Fe cation.

It catalyses the reaction homogentisate + O2 = 4-maleylacetoacetate + H(+). The protein operates within amino-acid degradation; L-phenylalanine degradation; acetoacetate and fumarate from L-phenylalanine: step 4/6. Functionally, involved in the catabolism of homogentisate (2,5-dihydroxyphenylacetate or 2,5-OH-PhAc), a central intermediate in the degradation of phenylalanine and tyrosine. Catalyzes the oxidative ring cleavage of the aromatic ring of homogentisate to yield maleylacetoacetate. The polypeptide is Homogentisate 1,2-dioxygenase (Burkholderia ambifaria (strain ATCC BAA-244 / DSM 16087 / CCUG 44356 / LMG 19182 / AMMD) (Burkholderia cepacia (strain AMMD))).